The sequence spans 106 residues: UPF0473 protein SSU98_0068 (106 aa).

This sequence belongs to the UPF0473 family.

The chain is UPF0473 protein SSU98_0068 from Streptococcus suis (strain 98HAH33).